We begin with the raw amino-acid sequence, 411 residues long: Probable phosphatase HAD1 (411 aa).

The span at 14–23 (LPSPNTSQPP) shows a compositional bias: polar residues. A disordered region spans residues 14-33 (LPSPNTSQPPSAAPSRRGSF). D61 acts as the Nucleophile in catalysis. The Mg(2+) site is built by D61, D63, and D338. The Proton donor role is filled by D63. The disordered stretch occupies residues 296–386 (PRPTPDVTPV…QSGQAGVTLD (91 aa)). Residues 326–345 (VRNTQTIMKGSDDLTGNDSV) show a composition bias toward polar residues. Over residues 362–373 (SVEKRAEMEFHR) the composition is skewed to basic and acidic residues.

This sequence belongs to the HAD-like hydrolase superfamily. In terms of processing, phosphorylated.

In terms of biological role, probable phosphatase. Required for cell wall integrity and virulence. The chain is Probable phosphatase HAD1 from Cryptococcus neoformans var. grubii serotype A (strain H99 / ATCC 208821 / CBS 10515 / FGSC 9487) (Filobasidiella neoformans var. grubii).